We begin with the raw amino-acid sequence, 650 residues long: Acetyl-coenzyme A synthetase (650 aa).

Residues 191–194, T311, and N335 contribute to the CoA site; that span reads RGGR. ATP is bound by residues 387–389, 411–416, D500, and R515; these read GEP and DTWWQT. S523 contacts CoA. Residue R526 coordinates ATP. Positions 537, 539, and 542 each coordinate Mg(2+). A CoA-binding site is contributed by R584. K609 carries the N6-acetyllysine modification.

Belongs to the ATP-dependent AMP-binding enzyme family. Mg(2+) serves as cofactor. Acetylated. Deacetylation by the SIR2-homolog deacetylase activates the enzyme.

It carries out the reaction acetate + ATP + CoA = acetyl-CoA + AMP + diphosphate. Catalyzes the conversion of acetate into acetyl-CoA (AcCoA), an essential intermediate at the junction of anabolic and catabolic pathways. AcsA undergoes a two-step reaction. In the first half reaction, AcsA combines acetate with ATP to form acetyl-adenylate (AcAMP) intermediate. In the second half reaction, it can then transfer the acetyl group from AcAMP to the sulfhydryl group of CoA, forming the product AcCoA. This is Acetyl-coenzyme A synthetase from Shewanella frigidimarina (strain NCIMB 400).